Reading from the N-terminus, the 451-residue chain is POU domain, class 3, transcription factor 1 (451 aa).

Disordered stretches follow at residues 1 to 21, 69 to 114, 127 to 154, 186 to 253, and 395 to 451; these read MATTAQYLPRGPGGGAGGTGP, AHPQ…GFHA, AWAQGSTAHHLGPAMSPSPGASGGHQPQ, GLHH…PSSD, and KRMT…GSVQ. Composition is skewed to gly residues over residues 11-20, 76-85, and 95-112; these read GPGGGAGGTG, TGGGGGGDWA, and AGGGGTGRADDGGGGGGF. Over residues 190 to 199 the composition is skewed to basic and acidic residues; that stretch reads ALHEDGHEAQ. Over residues 220–232 the composition is skewed to low complexity; the sequence is AGGLHAAAAHLHP. The 75-residue stretch at 247 to 321 folds into the POU-specific domain; the sequence is EDAPSSDDLE…LLNKWLEETD (75 aa). Positions 339-398 form a DNA-binding region, homeobox; sequence KRKKRTSIEVGVKGALESHFLKCPKPSAHEITGLADSLQLEKEVVRVWFCNRRQKEKRMT. Pro residues predominate over residues 427 to 436; the sequence is PSAPPPPPPA.

The protein belongs to the POU transcription factor family. Class-3 subfamily. In terms of tissue distribution, expressed in embryonal stem cells and in the developing brain.

It is found in the nucleus. In terms of biological role, transcription factor that binds to the octamer motif (5'-ATTTGCAT-3'). Acts as a transcriptional activator when binding cooperatively with SOX4, SOX11, or SOX12 to gene promoters. Acts as a transcriptional repressor of myelin-specific genes. This is POU domain, class 3, transcription factor 1 (POU3F1) from Homo sapiens (Human).